Consider the following 45-residue polypeptide: MGQQLAHNAYQIHSFASDSRLYNLVINIDTQPTTLFDGQTTPITS.

This is an uncharacterized protein from Dictyostelium discoideum (Social amoeba).